Reading from the N-terminus, the 124-residue chain is Fluoride-specific ion channel FluC (124 aa).

Helical transmembrane passes span 5 to 25, 35 to 55, 63 to 83, and 98 to 118; these read FLQV…VNIL, LGTL…AALL, LAPF…AFAL, and LGYV…GLTV. Na(+) is bound by residues G73 and T76.

The protein belongs to the fluoride channel Fluc/FEX (TC 1.A.43) family.

The protein resides in the cell inner membrane. It carries out the reaction fluoride(in) = fluoride(out). Its activity is regulated as follows. Na(+) is not transported, but it plays an essential structural role and its presence is essential for fluoride channel function. In terms of biological role, fluoride-specific ion channel. Important for reducing fluoride concentration in the cell, thus reducing its toxicity. This is Fluoride-specific ion channel FluC from Paracoccus denitrificans (strain Pd 1222).